Consider the following 389-residue polypeptide: Cytochrome f (389 aa).

Positions 1-42 (MTTFFISKVNGPVNKSLIWLKIHIYEFFLLKFMLLFPPTVCS) are cleaved as a signal peptide. Residues tyrosine 105, cysteine 125, cysteine 128, and histidine 129 each coordinate heme. A helical membrane pass occupies residues 355 to 375 (LQALIVFFIFVILTQLFLVLK).

This sequence belongs to the cytochrome f family. In terms of assembly, the 4 large subunits of the cytochrome b6-f complex are cytochrome b6, subunit IV (17 kDa polypeptide, petD), cytochrome f and the Rieske protein, while the 4 small subunits are PetG, PetL, PetM and PetN. The complex functions as a dimer. It depends on heme as a cofactor.

It localises to the plastid. The protein localises to the chloroplast thylakoid membrane. Functionally, component of the cytochrome b6-f complex, which mediates electron transfer between photosystem II (PSII) and photosystem I (PSI), cyclic electron flow around PSI, and state transitions. This is Cytochrome f from Pleurastrum terricola (Filamentous green alga).